The sequence spans 654 residues: U-box domain-containing protein 12 (654 aa).

The region spanning 255–329 is the U-box domain; it reads IPPEEFRCPI…AQWCESNGIE (75 aa). A disordered region spans residues 329–352; it reads EPPKRPNISQPSSKASSSSSAPDD. Residues 337–349 are compositionally biased toward low complexity; sequence SQPSSKASSSSSA. ARM repeat units follow at residues 387–427, 430–469, 471–510, 512–551, and 553–592; these read NHNR…NLSI, ENKGKIVYSSGAVPGIVHVLQKGSMEARENAAATLFSLSV, DENKVTIGAAGAIPPLVTLLSEGSQRGKKDAATALFNLCI, QGNKGKAVRAGLVPVLMRLLTEPESGMVDESLSILAILSS, and PDGKSEVGAADAVPVLVDFIRSGSPRNKENSAAVLVHLCS.

It carries out the reaction S-ubiquitinyl-[E2 ubiquitin-conjugating enzyme]-L-cysteine + [acceptor protein]-L-lysine = [E2 ubiquitin-conjugating enzyme]-L-cysteine + N(6)-ubiquitinyl-[acceptor protein]-L-lysine.. Its pathway is protein modification; protein ubiquitination. Its function is as follows. Functions as an E3 ubiquitin ligase. The polypeptide is U-box domain-containing protein 12 (PUB12) (Arabidopsis thaliana (Mouse-ear cress)).